The chain runs to 342 residues: MQSYIKNFESSWFAAVMGTGVLAVTSLFYSEYLPILKDISFLLFYFNILLFFVFLMLWILRWVKYPKNMIAELKHPVLSSFSPTVAVAMLVLGIDFILIKNNLFLGKIFWVFGAIGMFLFSLIVPFYMFKSESIKLDHVNPGWYIPPVGLIVIPIAGSLIMPHLTGVWHELTVLINYFGWGAGFFLYLALLAVVIYRFILHHPLPSAMAPTVWINLGPIGAGIVALINMVNNSPFITIKEPFYIFSFIFWGFGLWWSLMAIIMTLYYVKKLKLPYAMSWWAFIFPLGVYIASTHLVYKIFGFEIVDYIGFGLYWLLFFFWIVTLIKTINKVYSGELFKDKIN.

A run of 10 helical transmembrane segments spans residues 8-28, 39-59, 79-99, 108-128, 142-162, 175-195, 207-227, 242-262, 276-296, and 304-324; these read FESS…TSLF, ISFL…MLWI, SSFS…FILI, IFWV…PFYM, GWYI…LIMP, INYF…AVVI, AMAP…VALI, FYIF…MAII, AMSW…THLV, and IVDY…IVTL.

Belongs to the tellurite-resistance/dicarboxylate transporter (TDT) family.

It localises to the cell membrane. This is an uncharacterized protein from Methanocaldococcus jannaschii (strain ATCC 43067 / DSM 2661 / JAL-1 / JCM 10045 / NBRC 100440) (Methanococcus jannaschii).